We begin with the raw amino-acid sequence, 118 residues long: NADH-quinone oxidoreductase subunit A 2 (118 aa).

3 helical membrane-spanning segments follow: residues 5 to 25 (YLPI…SLVF), 60 to 80 (FYII…LYPW), and 87 to 107 (LGMF…VGYI).

Belongs to the complex I subunit 3 family. NDH-1 is composed of 14 different subunits. Subunits NuoA, H, J, K, L, M, N constitute the membrane sector of the complex.

It localises to the cell inner membrane. It carries out the reaction a quinone + NADH + 5 H(+)(in) = a quinol + NAD(+) + 4 H(+)(out). Its function is as follows. NDH-1 shuttles electrons from NADH, via FMN and iron-sulfur (Fe-S) centers, to quinones in the respiratory chain. The immediate electron acceptor for the enzyme in this species is believed to be ubiquinone. Couples the redox reaction to proton translocation (for every two electrons transferred, four hydrogen ions are translocated across the cytoplasmic membrane), and thus conserves the redox energy in a proton gradient. This is NADH-quinone oxidoreductase subunit A 2 from Geobacter metallireducens (strain ATCC 53774 / DSM 7210 / GS-15).